Reading from the N-terminus, the 204-residue chain is UPF0134 protein MPN_655 (204 aa).

Positions 46–132 (EVENKPKIPI…FNEFKDSNNQ (87 aa)) are disordered. The span at 64 to 80 (SPKPLKPPKPPKPPKGP) shows a compositional bias: pro residues. Over residues 117 to 132 (YVTRKEFNEFKDSNNQ) the composition is skewed to basic and acidic residues.

Belongs to the UPF0134 family.

This chain is UPF0134 protein MPN_655, found in Mycoplasma pneumoniae (strain ATCC 29342 / M129 / Subtype 1) (Mycoplasmoides pneumoniae).